The chain runs to 158 residues: 6,7-dimethyl-8-ribityllumazine synthase (158 aa).

5-amino-6-(D-ribitylamino)uracil-binding positions include Phe24, 58–60 (AFE), and 82–84 (AVI). Residue 87-88 (GT) coordinates (2S)-2-hydroxy-3-oxobutyl phosphate. His90 serves as the catalytic Proton donor. Phe115 is a binding site for 5-amino-6-(D-ribitylamino)uracil. (2S)-2-hydroxy-3-oxobutyl phosphate is bound at residue Arg129.

The protein belongs to the DMRL synthase family. As to quaternary structure, forms an icosahedral capsid composed of 60 subunits, arranged as a dodecamer of pentamers.

It catalyses the reaction (2S)-2-hydroxy-3-oxobutyl phosphate + 5-amino-6-(D-ribitylamino)uracil = 6,7-dimethyl-8-(1-D-ribityl)lumazine + phosphate + 2 H2O + H(+). Its pathway is cofactor biosynthesis; riboflavin biosynthesis; riboflavin from 2-hydroxy-3-oxobutyl phosphate and 5-amino-6-(D-ribitylamino)uracil: step 1/2. Catalyzes the formation of 6,7-dimethyl-8-ribityllumazine by condensation of 5-amino-6-(D-ribitylamino)uracil with 3,4-dihydroxy-2-butanone 4-phosphate. This is the penultimate step in the biosynthesis of riboflavin. In Azotobacter vinelandii (strain DJ / ATCC BAA-1303), this protein is 6,7-dimethyl-8-ribityllumazine synthase.